The sequence spans 304 residues: Acetyl-coenzyme A carboxylase carboxyl transferase subunit beta (304 aa).

The region spanning 23–292 is the CoA carboxyltransferase N-terminal domain; that stretch reads VWTKCDSCGQ…PNPEAPREGV (270 aa). Zn(2+)-binding residues include C27, C30, C46, and C49. A C4-type zinc finger spans residues 27-49; the sequence is CDSCGQVLYRAELERNLEVCPKC. The segment at 285-304 is disordered; that stretch reads PEAPREGVVVPPVPDQEPEA. A compositionally biased stretch (pro residues) spans 295–304; that stretch reads PPVPDQEPEA.

It belongs to the AccD/PCCB family. Acetyl-CoA carboxylase is a heterohexamer composed of biotin carboxyl carrier protein (AccB), biotin carboxylase (AccC) and two subunits each of ACCase subunit alpha (AccA) and ACCase subunit beta (AccD). The cofactor is Zn(2+).

Its subcellular location is the cytoplasm. The catalysed reaction is N(6)-carboxybiotinyl-L-lysyl-[protein] + acetyl-CoA = N(6)-biotinyl-L-lysyl-[protein] + malonyl-CoA. The protein operates within lipid metabolism; malonyl-CoA biosynthesis; malonyl-CoA from acetyl-CoA: step 1/1. Its function is as follows. Component of the acetyl coenzyme A carboxylase (ACC) complex. Biotin carboxylase (BC) catalyzes the carboxylation of biotin on its carrier protein (BCCP) and then the CO(2) group is transferred by the transcarboxylase to acetyl-CoA to form malonyl-CoA. This Escherichia coli O6:H1 (strain CFT073 / ATCC 700928 / UPEC) protein is Acetyl-coenzyme A carboxylase carboxyl transferase subunit beta.